The primary structure comprises 219 residues: Small ribosomal subunit protein uS3c (219 aa).

In terms of domain architecture, KH type-2 spans 43–120; it reads IQNYIQKNMQ…KINITITKIT (78 aa).

It belongs to the universal ribosomal protein uS3 family. As to quaternary structure, part of the 30S ribosomal subunit.

Its subcellular location is the plastid. It is found in the chloroplast. This chain is Small ribosomal subunit protein uS3c (rps3), found in Oenothera elata subsp. hookeri (Hooker's evening primrose).